We begin with the raw amino-acid sequence, 615 residues long: Probable methylmalonyl-CoA mutase small subunit (615 aa).

It belongs to the methylmalonyl-CoA mutase family. In terms of assembly, heterodimer of an alpha and a beta chain. It depends on adenosylcob(III)alamin as a cofactor.

The catalysed reaction is (R)-methylmalonyl-CoA = succinyl-CoA. Its pathway is metabolic intermediate metabolism; propanoyl-CoA degradation; succinyl-CoA from propanoyl-CoA: step 3/3. Its function is as follows. Catalyzes the isomerization of succinyl-CoA to methylmalonyl-CoA during synthesis of propionate from tricarboxylic acid-cycle intermediates. The protein is Probable methylmalonyl-CoA mutase small subunit (mutA) of Mycobacterium bovis (strain ATCC BAA-935 / AF2122/97).